A 127-amino-acid polypeptide reads, in one-letter code: Glycine cleavage system H protein (127 aa).

The 83-residue stretch at 24 to 106 folds into the Lipoyl-binding domain; sequence VVTVGVTFHA…YGAGWFFKLK (83 aa). Lys-65 carries the post-translational modification N6-lipoyllysine.

The protein belongs to the GcvH family. In terms of assembly, the glycine cleavage system is composed of four proteins: P, T, L and H. (R)-lipoate serves as cofactor.

In terms of biological role, the glycine cleavage system catalyzes the degradation of glycine. The H protein shuttles the methylamine group of glycine from the P protein to the T protein. The chain is Glycine cleavage system H protein from Laribacter hongkongensis (strain HLHK9).